The following is a 78-amino-acid chain: RNA-binding protein KhpA (78 aa).

Positions 29-78 (TIIYELTVAKPDIGKIIGKEGRTIKAIRTLLVSVASRNNVKVSLEIMEDK) constitute a KH domain.

Belongs to the KhpA RNA-binding protein family.

It localises to the cytoplasm. Functionally, a probable RNA-binding protein. The sequence is that of RNA-binding protein KhpA from Chlamydia caviae (strain ATCC VR-813 / DSM 19441 / 03DC25 / GPIC) (Chlamydophila caviae).